Consider the following 294-residue polypeptide: Ferredoxin--NADP reductase (294 aa).

The 125-residue stretch at 13 to 137 folds into the FAD-binding FR-type domain; it reads KNPYIGKCLS…TGPVGKEMLL (125 aa). FAD contacts are provided by residues 72–75, 93–95, tyrosine 99, 111–113, and threonine 152; these read RLYS, CVR, and VCS. Residues serine 75 and arginine 95 each contribute to the NADP(+) site. Residues threonine 152, 184–185, 214–215, lysine 224, 224–228, 253–254, and glutamate 292 each bind NADP(+); these read IP, SR, KMYIQ, and GL.

It belongs to the ferredoxin--NADP reductase type 1 family. It depends on FAD as a cofactor.

Its subcellular location is the cellular thylakoid membrane. It catalyses the reaction 2 reduced [2Fe-2S]-[ferredoxin] + NADP(+) + H(+) = 2 oxidized [2Fe-2S]-[ferredoxin] + NADPH. This Spirulina sp protein is Ferredoxin--NADP reductase (petH).